The primary structure comprises 282 residues: Endochitinase 4 (282 aa).

The GH18 domain occupies 1–282 (GAKNGVHPPL…TWSINWDGSK (282 aa)). Catalysis depends on E112, which acts as the Proton donor. The N-linked (GlcNAc...) asparagine glycan is linked to N265.

This sequence belongs to the glycosyl hydrolase 18 family. Chitinase class V subfamily.

It is found in the secreted. It carries out the reaction Random endo-hydrolysis of N-acetyl-beta-D-glucosaminide (1-&gt;4)-beta-linkages in chitin and chitodextrins.. In terms of biological role, secreted chitinase involved in the degradation of chitin, a component of the cell walls of fungi and exoskeletal elements of some animals (including worms and arthropods). Participates in the infection process and directly acts in the penetration process of the host cuticle. The protein is Endochitinase 4 (chi4) of Metarhizium anisopliae (Entomophthora anisopliae).